Consider the following 102-residue polypeptide: Pyrimidine/purine nucleoside phosphorylase (102 aa).

This sequence belongs to the nucleoside phosphorylase PpnP family.

The enzyme catalyses a purine D-ribonucleoside + phosphate = a purine nucleobase + alpha-D-ribose 1-phosphate. It carries out the reaction adenosine + phosphate = alpha-D-ribose 1-phosphate + adenine. It catalyses the reaction cytidine + phosphate = cytosine + alpha-D-ribose 1-phosphate. The catalysed reaction is guanosine + phosphate = alpha-D-ribose 1-phosphate + guanine. The enzyme catalyses inosine + phosphate = alpha-D-ribose 1-phosphate + hypoxanthine. It carries out the reaction thymidine + phosphate = 2-deoxy-alpha-D-ribose 1-phosphate + thymine. It catalyses the reaction uridine + phosphate = alpha-D-ribose 1-phosphate + uracil. The catalysed reaction is xanthosine + phosphate = alpha-D-ribose 1-phosphate + xanthine. Catalyzes the phosphorolysis of diverse nucleosides, yielding D-ribose 1-phosphate and the respective free bases. Can use uridine, adenosine, guanosine, cytidine, thymidine, inosine and xanthosine as substrates. Also catalyzes the reverse reactions. The protein is Pyrimidine/purine nucleoside phosphorylase of Shewanella amazonensis (strain ATCC BAA-1098 / SB2B).